Reading from the N-terminus, the 415-residue chain is tRNA(Ile2) 2-agmatinylcytidine synthetase TiaS (415 aa).

It belongs to the TiaS family.

The protein localises to the cytoplasm. The catalysed reaction is cytidine(34) in tRNA(Ile2) + agmatine + ATP + H2O = 2-agmatinylcytidine(34) in tRNA(Ile2) + AMP + 2 phosphate + 2 H(+). Its function is as follows. ATP-dependent agmatine transferase that catalyzes the formation of 2-agmatinylcytidine (agm2C) at the wobble position (C34) of tRNA(Ile2), converting the codon specificity from AUG to AUA. The chain is tRNA(Ile2) 2-agmatinylcytidine synthetase TiaS from Pyrobaculum neutrophilum (strain DSM 2338 / JCM 9278 / NBRC 100436 / V24Sta) (Thermoproteus neutrophilus).